The chain runs to 435 residues: D-inositol 3-phosphate glycosyltransferase (435 aa).

His-25 lines the 1D-myo-inositol 3-phosphate pocket. Residues 31–32 and Gly-39 each bind UDP-N-acetyl-alpha-D-glucosamine; that span reads QP. 1D-myo-inositol 3-phosphate contacts are provided by residues 36–41, Lys-94, Tyr-127, Thr-151, and Arg-171; that span reads DAGGMN. The UDP-N-acetyl-alpha-D-glucosamine site is built by Arg-245 and Lys-250. Mg(2+)-binding residues include Tyr-320, Arg-321, and Ala-323. UDP-N-acetyl-alpha-D-glucosamine-binding residues include Glu-333 and Glu-341. Thr-347 contacts Mg(2+).

The protein belongs to the glycosyltransferase group 1 family. MshA subfamily. As to quaternary structure, homodimer.

It catalyses the reaction 1D-myo-inositol 3-phosphate + UDP-N-acetyl-alpha-D-glucosamine = 1D-myo-inositol 2-acetamido-2-deoxy-alpha-D-glucopyranoside 3-phosphate + UDP + H(+). Its function is as follows. Catalyzes the transfer of a N-acetyl-glucosamine moiety to 1D-myo-inositol 3-phosphate to produce 1D-myo-inositol 2-acetamido-2-deoxy-glucopyranoside 3-phosphate in the mycothiol biosynthesis pathway. The protein is D-inositol 3-phosphate glycosyltransferase of Streptosporangium roseum (strain ATCC 12428 / DSM 43021 / JCM 3005 / KCTC 9067 / NCIMB 10171 / NRRL 2505 / NI 9100).